The primary structure comprises 607 residues: Elongation factor 4 (607 aa).

The region spanning 11 to 193 (GKIRNFSIIA…QIVEKVPAPT (183 aa)) is the tr-type G domain. GTP-binding positions include 23–28 (DHGKST) and 140–143 (NKID).

This sequence belongs to the TRAFAC class translation factor GTPase superfamily. Classic translation factor GTPase family. LepA subfamily.

It is found in the cell membrane. The enzyme catalyses GTP + H2O = GDP + phosphate + H(+). Its function is as follows. Required for accurate and efficient protein synthesis under certain stress conditions. May act as a fidelity factor of the translation reaction, by catalyzing a one-codon backward translocation of tRNAs on improperly translocated ribosomes. Back-translocation proceeds from a post-translocation (POST) complex to a pre-translocation (PRE) complex, thus giving elongation factor G a second chance to translocate the tRNAs correctly. Binds to ribosomes in a GTP-dependent manner. The protein is Elongation factor 4 of Streptococcus pneumoniae (strain JJA).